Here is a 1230-residue protein sequence, read N- to C-terminus: Protein transport protein Sec31A (1230 aa).

WD repeat units lie at residues 4 to 47 (KEID…EIFE), 64 to 111 (SSSH…AGDK), 120 to 160 (KHTG…TPMT), 166 to 206 (QPPE…PIIK), 209 to 254 (DHSN…SPLR), 258 to 298 (NHAR…VLYE), and 301 to 342 (TNTQ…DGLR). Residues 161–470 (PGAKTQPPED…IEASQTEFEK (310 aa)) form an interaction with SEC13 region. One copy of the WD 8; interaction with SEC13 repeat lies at 397-429 (SFSFGGKLVTFESVAVPLQQGAEQQRRQPVFIS). The residue at position 423 (R423) is an Asymmetric dimethylarginine. S526 and S531 each carry phosphoserine. Residue K646 forms a Glycyl lysine isopeptide (Lys-Gly) (interchain with G-Cter in ubiquitin) linkage. 2 disordered regions span residues 789–905 (QGKP…ASNA) and 924–1104 (MYTA…PIGN). A Phosphoserine modification is found at S798. The tract at residues 799–1123 (SQSPYERQPL…TEKITKKPIP (325 aa)) is interaction with PDCD6. The ALG-2-binding site motif-2 (ABS-2) motif lies at 841–847 (GFIMQGN). A compositionally biased stretch (pro residues) spans 866 to 876 (QLPPYPQPQPY). Low complexity-rich tracts occupy residues 930–940 (ASSPTSSSAAS) and 959–975 (PSSSAYALPPGTTGTPP). 2 stretches are compositionally biased toward polar residues: residues 981–995 (PASQRTENQSFQDQA) and 1033–1064 (PIMNPSGDPQSQGLQQQPSTPGPLSSHASFPQ). T1171 carries the phosphothreonine modification. At S1173 the chain carries Phosphoserine. Residue K1227 forms a Glycyl lysine isopeptide (Lys-Gly) (interchain with G-Cter in ubiquitin) linkage.

The protein belongs to the WD repeat SEC31 family. In terms of assembly, COPII is composed of at least 5 proteins: the SEC23/24 complex, the SEC13/31 complex and SAR1. SEC13 and SEC31 make a 2:2 tetramer that forms the edge element of the COPII outer coat. The tetramer self-assembles in multiple copies to form the complete polyhedral cage. Interacts (via WD 8) with SEC13. Interacts with PDCD6; interaction takes place in response to cytosolic calcium increase and leads to bridge together the BCR(KLHL12) complex and SEC31A, leading to monoubiquitination. Interacts with KLHL12. In terms of processing, monoubiquitinated by the BCR(KLHL12) E3 ubiquitin ligase complex, leading to regulate the size of COPII coats.

The protein localises to the cytoplasm. Its subcellular location is the cytoplasmic vesicle. It is found in the COPII-coated vesicle membrane. It localises to the endoplasmic reticulum membrane. Functionally, component of the coat protein complex II (COPII) which promotes the formation of transport vesicles from the endoplasmic reticulum (ER). The coat has two main functions, the physical deformation of the endoplasmic reticulum membrane into vesicles and the selection of cargo molecules. This chain is Protein transport protein Sec31A (Sec31a), found in Mus musculus (Mouse).